Here is an 863-residue protein sequence, read N- to C-terminus: Scm-like with four MBT domains protein 1 (863 aa).

MBT repeat units lie at residues 20 to 120 (FSWE…LEAP), 128 to 232 (SDWN…LQPP), 242 to 346 (ADWQ…INPP), and 354 to 451 (FDWA…LSTP). Residues 638–773 (KKKNKRIGRP…SDDENKPPSP (136 aa)) are disordered. Residues 660 to 679 (KSSKRRKRRKNIFVHKKKRS) show a composition bias toward basic residues. Positions 680 to 691 (SASVDNTPVGSP) are enriched in polar residues. Acidic residues-rich tracts occupy residues 696-710 (GEDE…EDSL) and 718-727 (QQEELQEESE). A compositionally biased stretch (low complexity) spans 734-744 (SSSSPTQSETP). Residues Ser-764 and Ser-772 each carry the phosphoserine modification. In terms of domain architecture, SAM spans 793 to 861 (WSVADVVRFI…RIKFAFYEQF (69 aa)).

As to quaternary structure, interacts with MYOD1. Component of the SLC (SFMBT1-LSD1-CoREST) corepressor complex, which also contains KDM1A/LSD1 and RCOR1/CoREST. Interacts with KDM1A/LSD1 and RCOR1/CoREST. Interacts with MYOD1. Interacts with L3MBTL3. In terms of tissue distribution, highly expressed in the testis, low expression is detected in brain, kidney, heart and lung. Highly expressed in germ cells, where it associates with the synaptic regions of meiotic chromosomes in pachytene stage spermatocytes.

Its subcellular location is the nucleus. In terms of biological role, histone-binding protein, which is part of various corepressor complexes. Mediates the recruitment of corepressor complexes to target genes, followed by chromatin compaction and repression of transcription. Plays a role during myogenesis: required for the maintenance of undifferentiated states of myogenic progenitor cells via interaction with MYOD1. Interaction with MYOD1 leads to the recruitment of associated corepressors and silencing of MYOD1 target genes. Part of the SLC complex in germ cells, where it may play a role during spermatogenesis. The polypeptide is Scm-like with four MBT domains protein 1 (Sfmbt1) (Mus musculus (Mouse)).